The primary structure comprises 576 residues: 2-isopropylmalate synthase (576 aa).

In terms of domain architecture, Pyruvate carboxyltransferase spans 31–305 (PIWMSTDLRD…DPGLDFSHVN (275 aa)). The Mg(2+) site is built by aspartate 40, histidine 244, histidine 246, and asparagine 280. The regulatory domain stretch occupies residues 437–576 (ADGPIGYVSH…RGMAPSMELA (140 aa)).

Belongs to the alpha-IPM synthase/homocitrate synthase family. LeuA type 2 subfamily. Homodimer. Mg(2+) is required as a cofactor.

It is found in the cytoplasm. It carries out the reaction 3-methyl-2-oxobutanoate + acetyl-CoA + H2O = (2S)-2-isopropylmalate + CoA + H(+). It participates in amino-acid biosynthesis; L-leucine biosynthesis; L-leucine from 3-methyl-2-oxobutanoate: step 1/4. Catalyzes the condensation of the acetyl group of acetyl-CoA with 3-methyl-2-oxobutanoate (2-ketoisovalerate) to form 3-carboxy-3-hydroxy-4-methylpentanoate (2-isopropylmalate). The chain is 2-isopropylmalate synthase from Ralstonia nicotianae (strain ATCC BAA-1114 / GMI1000) (Ralstonia solanacearum).